Reading from the N-terminus, the 310-residue chain is 4-diphosphocytidyl-2-C-methyl-D-erythritol kinase (310 aa).

K10 is a catalytic residue. Residue 102 to 112 (PVAGGMAGGSA) participates in ATP binding. D144 is a catalytic residue. The segment at 289-310 (TRTARGPAAGAQLLPGPVGSFA) is disordered.

The protein belongs to the GHMP kinase family. IspE subfamily.

It catalyses the reaction 4-CDP-2-C-methyl-D-erythritol + ATP = 4-CDP-2-C-methyl-D-erythritol 2-phosphate + ADP + H(+). Its pathway is isoprenoid biosynthesis; isopentenyl diphosphate biosynthesis via DXP pathway; isopentenyl diphosphate from 1-deoxy-D-xylulose 5-phosphate: step 3/6. In terms of biological role, catalyzes the phosphorylation of the position 2 hydroxy group of 4-diphosphocytidyl-2C-methyl-D-erythritol. This is 4-diphosphocytidyl-2-C-methyl-D-erythritol kinase from Cutibacterium acnes (strain DSM 16379 / KPA171202) (Propionibacterium acnes).